Consider the following 424-residue polypeptide: UDP-N-acetylglucosamine 1-carboxyvinyltransferase (424 aa).

Residue 22–23 (KN) coordinates phosphoenolpyruvate. Arginine 98 provides a ligand contact to UDP-N-acetyl-alpha-D-glucosamine. The Proton donor role is filled by cysteine 122. Cysteine 122 carries the post-translational modification 2-(S-cysteinyl)pyruvic acid O-phosphothioketal. Residues 127-131 (RPVDQ), aspartate 312, and isoleucine 334 each bind UDP-N-acetyl-alpha-D-glucosamine.

Belongs to the EPSP synthase family. MurA subfamily.

The protein resides in the cytoplasm. It catalyses the reaction phosphoenolpyruvate + UDP-N-acetyl-alpha-D-glucosamine = UDP-N-acetyl-3-O-(1-carboxyvinyl)-alpha-D-glucosamine + phosphate. It functions in the pathway cell wall biogenesis; peptidoglycan biosynthesis. In terms of biological role, cell wall formation. Adds enolpyruvyl to UDP-N-acetylglucosamine. The polypeptide is UDP-N-acetylglucosamine 1-carboxyvinyltransferase (Xanthomonas campestris pv. campestris (strain B100)).